The following is a 156-amino-acid chain: Small ribosomal subunit protein uS7 (156 aa).

This sequence belongs to the universal ribosomal protein uS7 family. As to quaternary structure, part of the 30S ribosomal subunit. Contacts proteins S9 and S11.

Functionally, one of the primary rRNA binding proteins, it binds directly to 16S rRNA where it nucleates assembly of the head domain of the 30S subunit. Is located at the subunit interface close to the decoding center, probably blocks exit of the E-site tRNA. The protein is Small ribosomal subunit protein uS7 of Streptococcus pneumoniae serotype 4 (strain ATCC BAA-334 / TIGR4).